We begin with the raw amino-acid sequence, 198 residues long: Protein GrpE (198 aa).

A disordered region spans residues 1 to 32 (MTTEKETATPADVEVASQEEQIDQTTEAQVEE).

The protein belongs to the GrpE family. As to quaternary structure, homodimer.

It is found in the cytoplasm. Functionally, participates actively in the response to hyperosmotic and heat shock by preventing the aggregation of stress-denatured proteins, in association with DnaK and GrpE. It is the nucleotide exchange factor for DnaK and may function as a thermosensor. Unfolded proteins bind initially to DnaJ; upon interaction with the DnaJ-bound protein, DnaK hydrolyzes its bound ATP, resulting in the formation of a stable complex. GrpE releases ADP from DnaK; ATP binding to DnaK triggers the release of the substrate protein, thus completing the reaction cycle. Several rounds of ATP-dependent interactions between DnaJ, DnaK and GrpE are required for fully efficient folding. The protein is Protein GrpE of Haemophilus ducreyi (strain 35000HP / ATCC 700724).